A 203-amino-acid polypeptide reads, in one-letter code: Tic20 family protein Ycf60 (203 aa).

Helical transmembrane passes span 2 to 22, 51 to 71, 84 to 104, 131 to 151, and 153 to 173; these read IRLFTFGIITMLVLVIARLAI, IIPYYLPLFEGLQNFGQYVLP, ILLPMLIFYMNHAILGLVTFF, ILLFLVGSLFGAIFRAFPIEF, and ISFIGLTVCNMMFWFILSTIT.

This sequence belongs to the Tic20 family.

It localises to the plastid. Its subcellular location is the chloroplast membrane. This Porphyra purpurea (Red seaweed) protein is Tic20 family protein Ycf60 (ycf60).